A 638-amino-acid polypeptide reads, in one-letter code: uncharacterized protein (638 aa).

Residues 1–138 form the CID domain; sequence MDLVELDYLS…KIENALLKYK (138 aa). 2 disordered regions span residues 318–338 and 615–638; these read QPPL…YSLS and LGKR…QESK.

This is an uncharacterized protein from Schizosaccharomyces pombe (strain 972 / ATCC 24843) (Fission yeast).